Here is a 304-residue protein sequence, read N- to C-terminus: Plasmodesmata-located protein 3 (304 aa).

The signal sequence occupies residues methionine 1–alanine 26. The Extracellular segment spans residues lysine 27–threonine 272. 2 Gnk2-homologous domains span residues threonine 34 to phenylalanine 138 and glycine 143 to asparagine 242. Cystine bridges form between cysteine 41–cysteine 116, cysteine 92–cysteine 101, cysteine 104–cysteine 129, cysteine 151–cysteine 220, cysteine 196–cysteine 205, and cysteine 208–cysteine 233. Residues valine 273–valine 293 traverse the membrane as a helical segment. Residues valine 273–valine 293 are necessary and sufficient for plasmodesmal targeting. Residues lysine 294–tyrosine 304 are Cytoplasmic-facing.

The protein belongs to the cysteine-rich repeat secretory protein family. Plasmodesmata-located proteins (PDLD) subfamily. In terms of assembly, (Microbial infection) Interacts with Grapevine fanleaf virus (GFLV) 2B-MP. As to expression, highly expressed in inflorescence pedacel and shoot apex. Expressed in the outermost L1 layer of the shoot apical meristem and in the epidermis of bulging floral primordia. Within the L1, expression was restricted to the peripheral zone (at protein level).

It is found in the cell membrane. The protein resides in the cell junction. It localises to the plasmodesma. Functionally, modulates cell-to-cell trafficking. The protein is Plasmodesmata-located protein 3 of Arabidopsis thaliana (Mouse-ear cress).